Here is a 322-residue protein sequence, read N- to C-terminus: Deoxyhypusine hydroxylase (322 aa).

4 HEAT-like PBS-type repeats span residues 76 to 102 (LKHE…VMLD), 109 to 135 (VRHE…SRRE), 234 to 260 (FKHE…VLKR), and 267 to 293 (VRHE…HLQD). Fe cation contacts are provided by H78, E79, H111, E112, H236, E237, H269, and E270.

This sequence belongs to the deoxyhypusine hydroxylase family. Fe(2+) is required as a cofactor.

It is found in the cytoplasm. It localises to the nucleus. The catalysed reaction is [eIF5A protein]-deoxyhypusine + AH2 + O2 = [eIF5A protein]-hypusine + A + H2O. Its pathway is protein modification; eIF5A hypusination. Its function is as follows. Catalyzes the hydroxylation of the N(6)-(4-aminobutyl)-L-lysine intermediate to form hypusine, an essential post-translational modification only found in mature eIF-5A factor. The protein is Deoxyhypusine hydroxylase of Eremothecium gossypii (strain ATCC 10895 / CBS 109.51 / FGSC 9923 / NRRL Y-1056) (Yeast).